A 508-amino-acid chain; its full sequence is ADP-ribosylarginine hydrolase CG3568 (508 aa).

Positions 209, 349, 351, 353, 354, 355, 390, 441, 448, 449, 459, and 460 each coordinate ADP-D-ribose.

The catalysed reaction is N(omega)-(ADP-D-ribosyl)-L-arginyl-[protein] + H2O = ADP-D-ribose + L-arginyl-[protein]. It carries out the reaction N(omega)-(ADP-D-ribosyl)-L-arginine + H2O = ADP-D-ribose + L-arginine. Protein ADP-ribosyl hydrolase that specifically removes mono-ADP-ribosyl modifications from protein arginine residues. In Drosophila melanogaster (Fruit fly), this protein is ADP-ribosylarginine hydrolase CG3568.